The primary structure comprises 266 residues: Pre-mRNA-splicing factor CWC26 (266 aa).

Disordered stretches follow at residues 1-37 (MALH…DKTS) and 118-149 (TRKT…KYED). Basic residues predominate over residues 16-26 (PKNKTKKKKKE). The segment covering 122-149 (IYRDAQGHKIQEDSKIDDSSFSRSKYED) has biased composition (basic and acidic residues).

The protein belongs to the CWC26 family. Belongs to the pre-mRNA retention and splicing (RES) complex composed of at least BUD13, IST3 and PML1. May also belong to the CWC complex (or CEF1-associated complex) composed of the U2, U5 and U6 snRNAs and at least BUD13, BUD31, BRR2, CDC40, CEF1, CLF1, CUS1, CWC2, CWC15, CWC21, CWC22, CWC23, CWC24, CWC25, CWC27, ECM2, HSH155, IST3, ISY1, LEA1, MSL1, NTC20, PRP8, PRP9, PRP11, PRP19, PRP21, PRP22, PRP45, PRP46, SLU7, SMB1, SMD1, SMD2, SMD3, SMX2, SMX3, SNT309, SNU114, SPP2, SYF1, SYF2, RSE1 and YJU2. Interacts with IST3 and PML1.

The protein resides in the cytoplasm. It localises to the nucleus. Functionally, required for efficient splicing and pre-mRNA nuclear retention. May also be involved in positioning the proximal bud pole signal. In Saccharomyces cerevisiae (strain ATCC 204508 / S288c) (Baker's yeast), this protein is Pre-mRNA-splicing factor CWC26 (BUD13).